The following is a 394-amino-acid chain: MKILIINSGSSSIKYQLMVMPANEVICSGMIDRIGLETSNITFKTVSNSFEEILPVPTHKVGLQKVADMLLDAETGVIKTTSEITAVGHRVVHGGSYFSNTTVITEEVKEKIKELSELAPLHNPAHLVGINVAEEIFASAKQVAVFDTAFHQTIPVEAHKYAIPNFLLTEHKVRVYGFHGTSHKYVSEKAINYLEKGSKIITIHLGNGCSMTAVKDGKSIDTTMGFSPANGLVMGTRAGDIDQSVIFYMVKSLGYTPDEVNSILLKQSGMLGLTGYSDLRDIESKASEGNKDCQLALLMNAYRIRKTIGSYAAALNGLDAIVFTAGIGENSSFMRNLICTDMDYFGIEIDKEKNQIRSKELREINTPNSIVKILVVPTDEEFEIANQVYQLLEN.

Asn-7 serves as a coordination point for Mg(2+). Lys-14 serves as a coordination point for ATP. Arg-90 is a binding site for substrate. The active-site Proton donor/acceptor is Asp-147. ATP-binding positions include 204 to 208, 278 to 280, and 326 to 330; these read HLGNG, DLR, and GIGEN. Glu-380 is a Mg(2+) binding site.

It belongs to the acetokinase family. As to quaternary structure, homodimer. The cofactor is Mg(2+). It depends on Mn(2+) as a cofactor.

Its subcellular location is the cytoplasm. It carries out the reaction acetate + ATP = acetyl phosphate + ADP. It functions in the pathway metabolic intermediate biosynthesis; acetyl-CoA biosynthesis; acetyl-CoA from acetate: step 1/2. In terms of biological role, catalyzes the formation of acetyl phosphate from acetate and ATP. Can also catalyze the reverse reaction. This Flavobacterium johnsoniae (strain ATCC 17061 / DSM 2064 / JCM 8514 / BCRC 14874 / CCUG 350202 / NBRC 14942 / NCIMB 11054 / UW101) (Cytophaga johnsonae) protein is Acetate kinase.